A 366-amino-acid chain; its full sequence is MPGIRVLVVDDSVVIRKLVSDLLSADPDIEVVGTAVNGRAALQKVAQLRPDLVTMDIEMPEMDGIESVRAIRATGNKVPIIMFSTLTERGAVATLDALGAGASDYVPKPANVGSVGRSMEQVREALIPRIKSLVPRRGITPHPAGVTVAPTATVQLHAPATPPLGGHRLLVIGSSTGGPEALSALLHTLPPLSVPVAVVQHMPPLFTRQFAARLDRQLPYDVVEAEHNQPLRPGTVAIAPGDYHLEVTTDAAGLRTRLTQAPPENYCRPAVDVLFRSAVAAVGPAVLAAVLTGMGSDGCKGARLIVERGGSVLAQDQATSVVWGMPGAVATAGLAERVLPLLELGPEILRRLARQRPSLVPAGALS.

Residues 5–123 (RVLVVDDSVV…SVGRSMEQVR (119 aa)) enclose the Response regulatory domain. A 4-aspartylphosphate modification is found at aspartate 56. Residues 163–355 (PLGGHRLLVI…PEILRRLARQ (193 aa)) form the CheB-type methylesterase domain. Catalysis depends on residues serine 175, histidine 201, and aspartate 297.

It belongs to the CheB family. In terms of processing, phosphorylated by CheA. Phosphorylation of the N-terminal regulatory domain activates the methylesterase activity.

The protein resides in the cytoplasm. The catalysed reaction is [protein]-L-glutamate 5-O-methyl ester + H2O = L-glutamyl-[protein] + methanol + H(+). The enzyme catalyses L-glutaminyl-[protein] + H2O = L-glutamyl-[protein] + NH4(+). Functionally, involved in chemotaxis. Part of a chemotaxis signal transduction system that modulates chemotaxis in response to various stimuli. Catalyzes the demethylation of specific methylglutamate residues introduced into the chemoreceptors (methyl-accepting chemotaxis proteins or MCP) by CheR. Also mediates the irreversible deamidation of specific glutamine residues to glutamic acid. This chain is Protein-glutamate methylesterase/protein-glutamine glutaminase, found in Nocardioides sp. (strain ATCC BAA-499 / JS614).